The chain runs to 690 residues: Methionine--tRNA ligase (690 aa).

A 'HIGH' region motif is present at residues 12–22 (PYANGSIHLGH). Residues Cys-143, Cys-146, Cys-156, and Cys-159 each contribute to the Zn(2+) site. A 'KMSKS' region motif is present at residues 328 to 332 (KMSKS). Lys-331 contributes to the ATP binding site. The region spanning 582-690 (DFAKVDLRIA…SGAEPGMKVK (109 aa)) is the tRNA-binding domain.

Belongs to the class-I aminoacyl-tRNA synthetase family. MetG type 1 subfamily. As to quaternary structure, homodimer. The cofactor is Zn(2+).

It is found in the cytoplasm. The catalysed reaction is tRNA(Met) + L-methionine + ATP = L-methionyl-tRNA(Met) + AMP + diphosphate. Functionally, is required not only for elongation of protein synthesis but also for the initiation of all mRNA translation through initiator tRNA(fMet) aminoacylation. This chain is Methionine--tRNA ligase, found in Thiobacillus denitrificans (strain ATCC 25259 / T1).